The sequence spans 25 residues: LRNVEQQCRADALVERAQELIHGQQ.

In terms of assembly, monomer.

The catalysed reaction is Endohydrolysis of the N-glycosidic bond at one specific adenosine on the 28S rRNA.. In terms of biological role, inhibits cell-free translation in a rabbit reticulocyte lysate system. The polypeptide is Ribosome-inactivating protein charantin (Momordica charantia (Bitter gourd)).